Consider the following 607-residue polypeptide: Chaperone protein HtpG (607 aa).

The segment at Met-1–Arg-323 is a; substrate-binding. The b stretch occupies residues Glu-324–Lys-534. The c stretch occupies residues Thr-535–Lys-607.

The protein belongs to the heat shock protein 90 family. Homodimer.

It localises to the cytoplasm. Molecular chaperone. Has ATPase activity. The polypeptide is Chaperone protein HtpG (Fusobacterium nucleatum subsp. nucleatum (strain ATCC 25586 / DSM 15643 / BCRC 10681 / CIP 101130 / JCM 8532 / KCTC 2640 / LMG 13131 / VPI 4355)).